The primary structure comprises 70 residues: Turripeptide OL179 (70 aa).

Residues Met-1–Ala-21 form the signal peptide. Positions Ser-22 to Arg-32 are excised as a propeptide.

As to expression, expressed by the venom duct.

The protein localises to the secreted. Acts as a neurotoxin by inhibiting an ion channel. The sequence is that of Turripeptide OL179 from Iotyrris olangoensis (Sea snail).